The chain runs to 96 residues: Large ribosomal subunit protein eL21 (96 aa).

It belongs to the eukaryotic ribosomal protein eL21 family.

The polypeptide is Large ribosomal subunit protein eL21 (Methanothrix thermoacetophila (strain DSM 6194 / JCM 14653 / NBRC 101360 / PT) (Methanosaeta thermophila)).